The primary structure comprises 128 residues: Histone H2A (128 aa).

A disordered region spans residues 1 to 22; the sequence is MSGRGKTGGKARAKAKTRSSRA. Position 2 is an N-acetylserine (Ser2). Ser2 carries the post-translational modification Phosphoserine. Position 6 is an N6-(2-hydroxyisobutyryl)lysine (Lys6). Lys6 is subject to N6-acetyllysine. The span at 7–19 shows a compositional bias: basic residues; the sequence is TGGKARAKAKTRS. Lys10 bears the N6-(2-hydroxyisobutyryl)lysine; alternate mark. Lys10 carries the post-translational modification N6-lactoyllysine; alternate. An N6-succinyllysine modification is found at Lys10. Residues Lys14 and Lys16 each participate in a glycyl lysine isopeptide (Lys-Gly) (interchain with G-Cter in ubiquitin) cross-link. Lys37 is subject to N6-(2-hydroxyisobutyryl)lysine; alternate. Lys75 and Lys76 each carry N6-(2-hydroxyisobutyryl)lysine. Lys96 carries the post-translational modification N6-(2-hydroxyisobutyryl)lysine; alternate. Lys96 bears the N6-succinyllysine mark. Residue Lys96 is modified to N6-glutaryllysine; alternate. Gln105 carries the post-translational modification N5-methylglutamine. Residue Lys119 is modified to N6-(2-hydroxyisobutyryl)lysine; alternate. N6-glutaryllysine; alternate occurs at positions 119, 120, and 126. Lys120 participates in a covalent cross-link: Glycyl lysine isopeptide (Lys-Gly) (interchain with G-Cter in ubiquitin).

In terms of assembly, the nucleosome is a histone octamer containing two molecules each of H2A, H2B, H3 and H4 assembled in one H3-H4 heterotetramer and two H2A-H2B heterodimers. The octamer wraps approximately 147 bp of DNA. Post-translationally, monoubiquitination of Lys-120 (H2AK119Ub) gives a specific tag for epigenetic transcriptional repression. Following DNA double-strand breaks (DSBs), it is ubiquitinated through 'Lys-63' linkage of ubiquitin moieties, leading to the recruitment of repair proteins to sites of DNA damage. H2AK119Ub and ionizing radiation-induced 'Lys-63'-linked ubiquitination are distinct events. Phosphorylation on Ser-2 is enhanced during mitosis. Phosphorylation on Ser-2 directly represses transcription. In terms of processing, glutamine methylation at Gln-105 (H2AQ104me) by FBL is specifically dedicated to polymerase I. It is present at 35S ribosomal DNA locus and impairs binding of the FACT complex. In terms of tissue distribution, expressed and secreted by skin epithelium.

It localises to the nucleus. Its subcellular location is the chromosome. Its function is as follows. Core component of nucleosome. Nucleosomes wrap and compact DNA into chromatin, limiting DNA accessibility to the cellular machineries which require DNA as a template. Histones thereby play a central role in transcription regulation, DNA repair, DNA replication and chromosomal stability. DNA accessibility is regulated via a complex set of post-translational modifications of histones, also called histone code, and nucleosome remodeling. The secreted form has antibacterial activity against Gram-positive bacteria and antifungal activity against S.cerevisiae. The chain is Histone H2A from Oncorhynchus mykiss (Rainbow trout).